The primary structure comprises 1503 residues: Transient receptor potential cation channel subfamily M member 2 (1503 aa).

Residues 1–20 (MEPSALRKAGSEQEEGFEGL) form a disordered region. Topologically, residues 1 to 752 (MEPSALRKAG…WWGQLSVDNG (752 aa)) are cytoplasmic. ADP-D-ribose-binding residues include T174, N179, R302, G333, and T336. T740 carries the phosphothreonine modification. The stretch at 753–769 (LWRVTLCMLAFPLLLTG) is an intramembrane region. Over 770–795 (LISFREKRLQDVGTPAARARAFFTAP) the chain is Cytoplasmic. Residues 796 to 816 (VVVFHLNILSYFAFLCLFAYV) traverse the membrane as a helical segment. The Extracellular portion of the chain corresponds to 817–827 (LMVDFQPVPSW). The helical transmembrane segment at 828–848 (CECAIYLWLFSLVCEEMRQLF) threads the bilayer. Positions 843 and 846 each coordinate Ca(2+). Residues 849–867 (YDPDECGLMKKAALYFSDF) are Cytoplasmic-facing. The helical transmembrane segment at 868–888 (WNKLDVGAILLFVAGLTCRLI) threads the bilayer. N869 lines the Ca(2+) pocket. Over 889–896 (PATLYPGR) the chain is Extracellular. Residues 897–917 (VILSLDFILFCLRLMHIFTIS) form a helical membrane-spanning segment. Over 918-929 (KTLGPKIIIVKR) the chain is Cytoplasmic. The helical transmembrane segment at 930-950 (MMKDVFFFLFLLAVWVVSFGV) threads the bilayer. Residues 951–970 (AKQAILIHNERRVDWLFRGA) are Extracellular-facing. An intramembrane region (pore-forming) is located at residues 971–985 (VYHSYLTIFGQIPGY). The Selectivity filter motif lies at 979 to 982 (FGQI). The Extracellular segment spans residues 986–1022 (IDGVNFNPEHCSPNGTDPYKPKCPESDATQQRPAFPE). A disulfide bridge links C996 with C1008. A helical membrane pass occupies residues 1023–1044 (WLTVLLLCLYLLFTNILLLNLL). Topologically, residues 1045-1079 (IAMFNYTFQQVQEHTDQIWKFQRHDLIEEYHGRPA) are cytoplasmic. Ca(2+) is bound at residue E1073. An intramembrane segment occupies 1080–1098 (APPPFILLSHLQLFIKRVV). At 1099-1503 (LKTPAKRHKQ…KAAAEFGAHY (405 aa)) the chain is on the cytoplasmic side. The interval 1206-1237 (EADVPTLASQKAAEEPDAEPGGRKKTEEPGDS) is disordered. The region spanning 1354 to 1498 (RWRRNEDGAI…KTLLQKAAAE (145 aa)) is the Nudix hydrolase domain. ADP-D-ribose contacts are provided by L1381 and S1382. The short motif at 1390–1411 (GSREPGEMLPRKLKRILRQEHW) is the Nudix box element. Positions 1431, 1433, 1485, and 1487 each coordinate ADP-D-ribose.

It belongs to the transient receptor (TC 1.A.4) family. LTrpC subfamily. TRPM2 sub-subfamily. Homotetramer. Isoform 1 can interact with isoform 3. This interaction decreases Ca(2+) influx through isoform 1 and suppresses susceptibility to oxidative stress-induced cell death. Post-translationally, phosphorylation of TRPM2 at Thr-740 by protein kinase C (PKC) counteracts the effect of cytosolic Ca(2+) and elevates the temperature threshold. As to expression, highly expressed in brain and peripheral blood cells, such as neutrophils. Also detected in bone marrow, spleen, heart, liver and lung. Isoform 2 is found in neutrophil granulocytes.

It localises to the cell membrane. The protein localises to the perikaryon. Its subcellular location is the cell projection. The protein resides in the cytoplasmic vesicle. It is found in the lysosome. It carries out the reaction Ca(2+)(in) = Ca(2+)(out). The enzyme catalyses Na(+)(in) = Na(+)(out). Activated by intracellular ADP-ribose, beta-NAD (NAD(+)) and similar compounds, and by oxidative stress caused by reactive oxygen or nitrogen species. Ca(2+) and PI(4,5)P2 are required for channel opening by ADP-ribose. Activation by ADP-ribose and beta-NAD is strongly increased by moderate heat (35 to 40 degrees Celsius). Likewise, reactive oxygen species lower the threshold for activation by moderate heat (37 degrees Celsius). Activated by moderate heat (35 to 40 degrees Celsius). Inactivated by exposure to extracellular pH between 4.0 and 6.5; irreversibly inactivated when open channels are exposed to extracellular pH between 4.0 and 6.5, while pre-exposure of closed channels to extracellular pH 5.5 gives rise to currents that rapidly inactivate, but protects against irreversible inactivation. Inactivated by intracellular ATP. Activated by arachidonic acid. Inhibited by 2-aminoethyl diphenylborinate (2-APB). Nonselective, voltage-independent cation channel that mediates Na(+) and Ca(2+) influx, leading to increased cytoplasmic Ca(2+) levels. Functions as a ligand-gated ion channel, gated by intracellular adenosine diphosphate ribose (ADP-ribose), Ca(2+), warm temperature, and oxidative stress. The precise physiological activators are under debate; the true, physiological activators may be ADP-ribose and ADP-ribose-2'-phosphate. Binding of ADP-ribose to the cytoplasmic Nudix domain causes a conformation change; the channel is primed but still requires Ca(2+) binding to trigger channel opening. Extracellular Ca(2+) passes through the channel and increases channel activity. Contributes to Ca(2+) release from intracellular stores in response to ADP-ribose. Plays a role in numerous processes that involve signaling via intracellular Ca(2+) levels. Besides, mediates the release of lysosomal Zn(2+) stores in response to reactive oxygen species, leading to increased cytosolic Zn(2+) levels. Plays a role in mediating behavorial and physiological responses to moderate heat and thereby contributes to body temperature homeostasis. Plays a role in insulin secretion, a process that requires increased cytoplasmic Ca(2+) levels. Required for normal IFNG and cytokine secretion and normal innate immune immunity in response to bacterial infection. Required for normal phagocytosis and cytokine release by macrophages exposed to zymosan (in vitro). Plays a role in dendritic cell differentiation and maturation, and in dendritic cell chemotaxis via its role in regulating cytoplasmic Ca(2+) levels. Plays a role in the regulation of the reorganization of the actin cytoskeleton and filopodia formation in response to reactive oxygen species via its role in increasing cytoplasmic Ca(2+) and Zn(2+) levels. Confers susceptibility to cell death following oxidative stress. Its function is as follows. Lacks cation channel activity. Does not mediate cation transport in response to oxidative stress or ADP-ribose. In terms of biological role, lacks cation channel activity and negatively regulates the channel activity of isoform 1. Negatively regulates susceptibility to cell death in reposponse to oxidative stress. This Homo sapiens (Human) protein is Transient receptor potential cation channel subfamily M member 2 (TRPM2).